Here is a 268-residue protein sequence, read N- to C-terminus: Tryptophan synthase alpha chain (268 aa).

Residues glutamate 49 and aspartate 60 each act as proton acceptor in the active site.

Belongs to the TrpA family. Tetramer of two alpha and two beta chains.

It carries out the reaction (1S,2R)-1-C-(indol-3-yl)glycerol 3-phosphate + L-serine = D-glyceraldehyde 3-phosphate + L-tryptophan + H2O. Its pathway is amino-acid biosynthesis; L-tryptophan biosynthesis; L-tryptophan from chorismate: step 5/5. In terms of biological role, the alpha subunit is responsible for the aldol cleavage of indoleglycerol phosphate to indole and glyceraldehyde 3-phosphate. The sequence is that of Tryptophan synthase alpha chain from Photorhabdus laumondii subsp. laumondii (strain DSM 15139 / CIP 105565 / TT01) (Photorhabdus luminescens subsp. laumondii).